A 566-amino-acid chain; its full sequence is Poly(A) polymerase pla1 (566 aa).

ATP-binding positions include 86 to 88 (YGS), 99 to 101 (DID), aspartate 153, lysine 214, tyrosine 223, and 232 to 233 (GV). Residues aspartate 99, aspartate 101, and aspartate 153 each contribute to the Mg(2+) site. Disordered regions lie at residues 437–463 (HEKLANDTVNEEKADNTESKADGSENG) and 530–566 (DEVFEPGEERPKATKKRSTADTAHSTEQLKRQKVSTA).

It belongs to the poly(A) polymerase family. The cofactor is Mg(2+). Mn(2+) serves as cofactor.

It localises to the nucleus. The catalysed reaction is RNA(n) + ATP = RNA(n)-3'-adenine ribonucleotide + diphosphate. Its function is as follows. Polymerase that creates the 3'-poly(A) tail of mRNA's. May acquire specificity through interaction with a cleavage and polyadenylation factor (CF I). The polypeptide is Poly(A) polymerase pla1 (pla1) (Schizosaccharomyces pombe (strain 972 / ATCC 24843) (Fission yeast)).